Here is a 511-residue protein sequence, read N- to C-terminus: Bifunctional purine biosynthesis protein PurH (511 aa).

The 145-residue stretch at 1 to 145 folds into the MGS-like domain; that stretch reads MKKRALVSVS…KNHKFVSVIV (145 aa).

The protein belongs to the PurH family.

The enzyme catalyses (6R)-10-formyltetrahydrofolate + 5-amino-1-(5-phospho-beta-D-ribosyl)imidazole-4-carboxamide = 5-formamido-1-(5-phospho-D-ribosyl)imidazole-4-carboxamide + (6S)-5,6,7,8-tetrahydrofolate. The catalysed reaction is IMP + H2O = 5-formamido-1-(5-phospho-D-ribosyl)imidazole-4-carboxamide. It participates in purine metabolism; IMP biosynthesis via de novo pathway; 5-formamido-1-(5-phospho-D-ribosyl)imidazole-4-carboxamide from 5-amino-1-(5-phospho-D-ribosyl)imidazole-4-carboxamide (10-formyl THF route): step 1/1. Its pathway is purine metabolism; IMP biosynthesis via de novo pathway; IMP from 5-formamido-1-(5-phospho-D-ribosyl)imidazole-4-carboxamide: step 1/1. The chain is Bifunctional purine biosynthesis protein PurH from Bacillus thuringiensis (strain Al Hakam).